The sequence spans 289 residues: Acetyl-coenzyme A carboxylase carboxyl transferase subunit beta (289 aa).

Residues 34–289 (MWVKCNKCGE…KLINMHQNSF (256 aa)) enclose the CoA carboxyltransferase N-terminal domain. Residues C38, C41, C57, and C60 each contribute to the Zn(2+) site. The segment at 38 to 60 (CNKCGEILYQNDLEKNYMVCNLC) adopts a C4-type zinc-finger fold.

The protein belongs to the AccD/PCCB family. In terms of assembly, acetyl-CoA carboxylase is a heterohexamer composed of biotin carboxyl carrier protein (AccB), biotin carboxylase (AccC) and two subunits each of ACCase subunit alpha (AccA) and ACCase subunit beta (AccD). The cofactor is Zn(2+).

Its subcellular location is the cytoplasm. It catalyses the reaction N(6)-carboxybiotinyl-L-lysyl-[protein] + acetyl-CoA = N(6)-biotinyl-L-lysyl-[protein] + malonyl-CoA. The protein operates within lipid metabolism; malonyl-CoA biosynthesis; malonyl-CoA from acetyl-CoA: step 1/1. Component of the acetyl coenzyme A carboxylase (ACC) complex. Biotin carboxylase (BC) catalyzes the carboxylation of biotin on its carrier protein (BCCP) and then the CO(2) group is transferred by the transcarboxylase to acetyl-CoA to form malonyl-CoA. This Clostridium botulinum (strain ATCC 19397 / Type A) protein is Acetyl-coenzyme A carboxylase carboxyl transferase subunit beta.